A 277-amino-acid polypeptide reads, in one-letter code: 4-hydroxy-tetrahydrodipicolinate reductase (277 aa).

9-14 (GATGRM) provides a ligand contact to NAD(+). K37 serves as a coordination point for NADP(+). NAD(+) is bound at residue 75–77 (GTS). H132 acts as the Proton donor/acceptor in catalysis. K136 acts as the Proton donor in catalysis. 142–143 (GT) lines the (S)-2,3,4,5-tetrahydrodipicolinate pocket. 2 disordered regions span residues 154–173 (ARGARGPVQAPHTDQRARGQ) and 247–277 (ERAAQAAAGDAPSGPVDDGGPSGQAATVTSA). Low complexity predominate over residues 250–265 (AQAAAGDAPSGPVDDG).

Belongs to the DapB family.

Its subcellular location is the cytoplasm. The catalysed reaction is (S)-2,3,4,5-tetrahydrodipicolinate + NAD(+) + H2O = (2S,4S)-4-hydroxy-2,3,4,5-tetrahydrodipicolinate + NADH + H(+). It catalyses the reaction (S)-2,3,4,5-tetrahydrodipicolinate + NADP(+) + H2O = (2S,4S)-4-hydroxy-2,3,4,5-tetrahydrodipicolinate + NADPH + H(+). Its pathway is amino-acid biosynthesis; L-lysine biosynthesis via DAP pathway; (S)-tetrahydrodipicolinate from L-aspartate: step 4/4. In terms of biological role, catalyzes the conversion of 4-hydroxy-tetrahydrodipicolinate (HTPA) to tetrahydrodipicolinate. This is 4-hydroxy-tetrahydrodipicolinate reductase from Clavibacter michiganensis subsp. michiganensis (strain NCPPB 382).